A 92-amino-acid polypeptide reads, in one-letter code: Small ribosomal subunit protein uS19 (92 aa).

This sequence belongs to the universal ribosomal protein uS19 family.

Functionally, protein S19 forms a complex with S13 that binds strongly to the 16S ribosomal RNA. The sequence is that of Small ribosomal subunit protein uS19 from Cellvibrio japonicus (strain Ueda107) (Pseudomonas fluorescens subsp. cellulosa).